Reading from the N-terminus, the 463-residue chain is L-2-hydroxyglutarate dehydrogenase, mitochondrial (463 aa).

A mitochondrion-targeting transit peptide spans 1–52 (MVPALRYLGSVCGRARGIFPGGFSAAHTPASGKSRLLCQGGRRASTSSFDIV). Residues lysine 104 and lysine 173 each carry the N6-acetyllysine modification.

Belongs to the L2HGDH family. FAD is required as a cofactor.

The protein localises to the mitochondrion. The enzyme catalyses (S)-2-hydroxyglutarate + A = 2-oxoglutarate + AH2. This chain is L-2-hydroxyglutarate dehydrogenase, mitochondrial (L2HGDH), found in Bos taurus (Bovine).